Reading from the N-terminus, the 559-residue chain is Berberine bridge enzyme-like A (559 aa).

Residues 1 to 21 (MFPLIILISFSLASLSETATG) form the signal peptide. Asparagine 25 and asparagine 37 each carry an N-linked (GlcNAc...) asparagine glycan. A disulfide bridge connects residues cysteine 29 and cysteine 86. One can recognise an FAD-binding PCMH-type domain in the interval 64-240 (FMPKPTFIIL…YAWKIRLLKV (177 aa)). Histidine 101 is modified (pros-8alpha-FAD histidine). Asparagine 321, asparagine 355, and asparagine 494 each carry an N-linked (GlcNAc...) asparagine glycan.

The protein belongs to the oxygen-dependent FAD-linked oxidoreductase family. FAD serves as cofactor. As to expression, mostly expressed in roots.

Its subcellular location is the vacuole. It functions in the pathway alkaloid biosynthesis; nicotine biosynthesis. In terms of biological role, involved in the biosynthesis of pyridine alkaloid natural products, leading mainly to the production of anabasine, anatabine, nicotine and nornicotine, effective deterrents against herbivores with antiparasitic and pesticide properties (neurotoxins); nornicotine serves as the precursor in the synthesis of the carcinogen compound N'-nitrosonornicotine (NNN). Catalyzes a late oxidation step subsequent to the pyridine ring condensation reaction in the biosynthesis of alkaloids. In Nicotiana tabacum (Common tobacco), this protein is Berberine bridge enzyme-like A.